The following is a 502-amino-acid chain: Mannitol 2-dehydrogenase (502 aa).

37-48 (IVHVGVGGFHRA) contributes to the NAD(+) binding site.

It belongs to the mannitol dehydrogenase family. As to quaternary structure, monomer.

The enzyme catalyses D-mannitol + NAD(+) = D-fructose + NADH + H(+). Its function is as follows. Catalyzes the NAD(H)-dependent interconversion of D-fructose and D-mannitol in the mannitol metabolic pathway. The chain is Mannitol 2-dehydrogenase from Aspergillus oryzae (strain ATCC 42149 / RIB 40) (Yellow koji mold).